Reading from the N-terminus, the 647-residue chain is Pre-mRNA-splicing factor SLU7 (647 aa).

Residues 1 to 19 are compositionally biased toward polar residues; that stretch reads MASYKQNLPPSALIKQQVN. The disordered stretch occupies residues 1-44; sequence MASYKQNLPPSALIKQQVNVADKKSKAEVQRDRQLEEDRKAGTA. Basic and acidic residues predominate over residues 21 to 41; sequence ADKKSKAEVQRDRQLEEDRKA. A CCHC-type zinc finger spans residues 113–130; it reads GACENCGAMGHQKRDCFD. Disordered regions lie at residues 193-212 and 465-620; these read HEMK…APKD and EVKE…KEME. Residues 465–479 show a composition bias toward basic and acidic residues; the sequence is EVKEEKEKEDSIKDE. A compositionally biased stretch (acidic residues) spans 480 to 491; it reads VAEENSDNDNDE. A compositionally biased stretch (basic and acidic residues) spans 513–533; sequence EKEREKERLIEKERRERDQRR. Residues 534-555 show a composition bias toward basic residues; it reads RDKKREKRERKKAKLGKRKRRH. Positions 588–606 are enriched in basic and acidic residues; sequence EKAEGMKAAREGDRGRKYN.

It belongs to the SLU7 family.

The protein localises to the nucleus. Its function is as follows. Participates in the second catalytic step of pre-mRNA splicing, when the free hydroxyl group of exon I attacks the 3'-splice site to generate spliced mRNA and the excised lariat intron. This chain is Pre-mRNA-splicing factor SLU7, found in Caenorhabditis elegans.